We begin with the raw amino-acid sequence, 568 residues long: Phosphoprotein (568 aa).

Disordered stretches follow at residues 1-23 (MDQD…GGRE) and 38-320 (SEPT…GIGE). Basic and acidic residues predominate over residues 7–20 (ILKEDSEVEREAPG). The interval 33–41 (DAVLSSEPT) is N0 binding. The span at 50 to 59 (LHNTINTPQG) shows a compositional bias: polar residues. At serine 68 the chain carries Phosphoserine; by host. Positions 83–101 (RSGEESRVSGRTSKPEAEA) are enriched in basic and acidic residues. Serine 125 carries the post-translational modification Phosphoserine; by host. Basic and acidic residues predominate over residues 150 to 168 (GIEDENREMAAHPDKRGED). A compositionally biased stretch (polar residues) spans 191 to 206 (ASNNGRSMEPGSSHSA). Serine 192, serine 249, serine 257, and serine 260 each carry phosphoserine; by host. The multimerization stretch occupies residues 344 to 411 (FESSRDASYV…SFRDIYKRFS (68 aa)). Positions 364 to 429 (YAEMTFNVCG…LLMSNLSTLH (66 aa)) form a coiled coil. A l protein binding region spans residues 412 to 445 (EYQKEQNSLLMSNLSTLHIITDRGGKTDNTDSLT). Serine 447 and serine 449 each carry phosphoserine; by host. Positions 479–568 (DLIREDEFRD…VEEDIESLTN (90 aa)) are interaction with the nucleocapsid (N-RNA). The interval 496-516 (QERDTEPRASNASRLLPSKEK) is disordered. The formation of N-RNA complex involved in transcription and replication stretch occupies residues 547–566 (KTDQEVKAVMELVEEDIESL).

It belongs to the respirovirus P protein family. In terms of assembly, homotetramer. Interacts (via multimerization domain) with polymerase L; this interaction forms the polymerase complex. Interacts (via N-terminus) with N0; this interaction allows P to chaperon N0 before encapsidation and form the N-P complex. Interacts (via C-terminus) with N-RNA template; this interaction positions the polymerase on the template. Phosphorylated by PKC/PRKCZ, and other unknown kinases. Phosphorylation is necessary for viral transcription and replication. The N-terminus contains the majority of phosphorylated sites. Ser-249 is the major site of phosphorylation, but is not necessary for most functions.

It localises to the host cytoplasm. Functionally, essential cofactor of the RNA polymerase L that plays a central role in the transcription and replication by forming the polymerase complex with RNA polymerase L and recruiting L to the genomic N-RNA template for RNA synthesis. Also plays a central role in the encapsidation of nascent RNA chains by forming the encapsidation complex with the nucleocapsid protein N (N-P complex). Acts as a chaperone for newly synthesized free N protein, so-called N0, allowing encapsidation of nascent RNA chains during replication. The nucleoprotein protein N prevents excessive phosphorylation of P, which leads to down-regulation of viral transcription/ replication. Participates, together with N, in the formation of viral factories (viroplasms), which are large inclusions in the host cytoplasm where replication takes place. Recruits host PI4KB and remodel the host endoplasmic reticulum membrane to form viral replication factories. In Cavia cutleri (Guinea pig), this protein is Phosphoprotein (P/V/C).